The following is a 390-amino-acid chain: Acetate kinase (390 aa).

Asn10 provides a ligand contact to Mg(2+). Lys17 serves as a coordination point for ATP. Residue Arg89 participates in substrate binding. Catalysis depends on Asp146, which acts as the Proton donor/acceptor. Residues His204–Gly208, Asp278–Arg280, and Gly323–Asn327 contribute to the ATP site. Residue Glu376 participates in Mg(2+) binding.

This sequence belongs to the acetokinase family. As to quaternary structure, homodimer. The cofactor is Mg(2+). Mn(2+) serves as cofactor.

The protein resides in the cytoplasm. It carries out the reaction acetate + ATP = acetyl phosphate + ADP. It participates in metabolic intermediate biosynthesis; acetyl-CoA biosynthesis; acetyl-CoA from acetate: step 1/2. Catalyzes the formation of acetyl phosphate from acetate and ATP. Can also catalyze the reverse reaction. In Mycoplasma pneumoniae (strain ATCC 29342 / M129 / Subtype 1) (Mycoplasmoides pneumoniae), this protein is Acetate kinase.